Reading from the N-terminus, the 333-residue chain is Adenosine deaminase (333 aa).

2 residues coordinate Zn(2+): H12 and H14. Substrate contacts are provided by H14, D16, and G170. H197 contributes to the Zn(2+) binding site. The active-site Proton donor is the E200. D278 is a Zn(2+) binding site. D279 contributes to the substrate binding site.

Belongs to the metallo-dependent hydrolases superfamily. Adenosine and AMP deaminases family. Adenosine deaminase subfamily. Zn(2+) serves as cofactor.

The catalysed reaction is adenosine + H2O + H(+) = inosine + NH4(+). It carries out the reaction 2'-deoxyadenosine + H2O + H(+) = 2'-deoxyinosine + NH4(+). Its function is as follows. Catalyzes the hydrolytic deamination of adenosine and 2-deoxyadenosine. This chain is Adenosine deaminase, found in Aliivibrio fischeri (strain MJ11) (Vibrio fischeri).